Reading from the N-terminus, the 194-residue chain is Endoribonuclease YbeY (194 aa).

Residues His-127, His-131, and Asp-137 each coordinate Zn(2+). The segment at 162–194 is disordered; that stretch reads PLSNDEDSAPEQDDSFDDDASDSSGGIMSGGVS. A compositionally biased stretch (acidic residues) spans 165 to 182; sequence NDEDSAPEQDDSFDDDAS.

This sequence belongs to the endoribonuclease YbeY family. The cofactor is Zn(2+).

Its subcellular location is the cytoplasm. Its function is as follows. Single strand-specific metallo-endoribonuclease involved in late-stage 70S ribosome quality control and in maturation of the 3' terminus of the 16S rRNA. The protein is Endoribonuclease YbeY of Rhodopirellula baltica (strain DSM 10527 / NCIMB 13988 / SH1).